A 462-amino-acid polypeptide reads, in one-letter code: Squalene synthase ERG9 (462 aa).

The chain crosses the membrane as a helical span at residues 406-426; that stretch reads AVVLFGVVIAALVCISGLMLG.

This sequence belongs to the phytoene/squalene synthase family. The cofactor is Mg(2+).

The protein localises to the endoplasmic reticulum membrane. The protein resides in the microsome. It carries out the reaction 2 (2E,6E)-farnesyl diphosphate + NADPH + H(+) = squalene + 2 diphosphate + NADP(+). The enzyme catalyses 2 (2E,6E)-farnesyl diphosphate + NADH + H(+) = squalene + 2 diphosphate + NAD(+). The protein operates within terpene metabolism; lanosterol biosynthesis; lanosterol from farnesyl diphosphate: step 1/3. Its pathway is steroid metabolism; ergosterol biosynthesis. In terms of biological role, squalene synthase; part of the third module of ergosterol biosynthesis pathway that includes the late steps of the pathway. ERG9 produces squalene from 2 farnesyl pyrophosphate moieties. The third module or late pathway involves the ergosterol synthesis itself through consecutive reactions that mainly occur in the endoplasmic reticulum (ER) membrane. Firstly, the squalene synthase ERG9 catalyzes the condensation of 2 farnesyl pyrophosphate moieties to form squalene, which is the precursor of all steroids. Squalene synthase is crucial for balancing the incorporation of farnesyl diphosphate (FPP) into sterol and nonsterol isoprene synthesis. Secondly, squalene is converted into lanosterol by the consecutive action of the squalene epoxidase ERG1 and the lanosterol synthase ERG7. Then, the delta(24)-sterol C-methyltransferase ERG6 methylates lanosterol at C-24 to produce eburicol. Eburicol is the substrate of the sterol 14-alpha demethylase encoded by CYP51A, CYP51B and CYP51C, to yield 4,4,24-trimethyl ergosta-8,14,24(28)-trienol. CYP51B encodes the enzyme primarily responsible for sterol 14-alpha-demethylation, and plays an essential role in ascospore formation. CYP51A encodes an additional sterol 14-alpha-demethylase, induced on ergosterol depletion and responsible for the intrinsic variation in azole sensitivity. The third CYP51 isoform, CYP51C, does not encode a sterol 14-alpha-demethylase, but is required for full virulence on host wheat ears. The C-14 reductase ERG24 then reduces the C14=C15 double bond which leads to 4,4-dimethylfecosterol. A sequence of further demethylations at C-4, involving the C-4 demethylation complex containing the C-4 methylsterol oxidases ERG25, the sterol-4-alpha-carboxylate 3-dehydrogenase ERG26 and the 3-keto-steroid reductase ERG27, leads to the production of fecosterol via 4-methylfecosterol. ERG28 has a role as a scaffold to help anchor ERG25, ERG26 and ERG27 to the endoplasmic reticulum. The C-8 sterol isomerase ERG2 then catalyzes the reaction which results in unsaturation at C-7 in the B ring of sterols and thus converts fecosterol to episterol. The sterol-C5-desaturases ERG3A and ERG3BB then catalyze the introduction of a C-5 double bond in the B ring to produce 5-dehydroepisterol. The C-22 sterol desaturases ERG5A and ERG5B further convert 5-dehydroepisterol into ergosta-5,7,22,24(28)-tetraen-3beta-ol by forming the C-22(23) double bond in the sterol side chain. Finally, ergosta-5,7,22,24(28)-tetraen-3beta-ol is substrate of the C-24(28) sterol reductase ERG4 to produce ergosterol. This Gibberella zeae (strain ATCC MYA-4620 / CBS 123657 / FGSC 9075 / NRRL 31084 / PH-1) (Wheat head blight fungus) protein is Squalene synthase ERG9.